The primary structure comprises 236 residues: Exotoxin type H (236 aa).

Residues 1 to 32 (MRYNCRYSHIDKKIYSMIICLSFLLYSNVVQA) form the signal peptide.

Belongs to the staphylococcal/streptococcal toxin family.

The protein localises to the secreted. Its function is as follows. Mitogenic for human peripheral blood lymphocytes. This chain is Exotoxin type H (speH), found in Streptococcus pyogenes serotype M1.